Here is a 250-residue protein sequence, read N- to C-terminus: Lymphotoxin-beta (250 aa).

At 1 to 26 (MGAPGLETRAGGPNGKSYLLLASVGA) the chain is on the cytoplasmic side. Residues 27–47 (AVLGTLLLSVPITVLTVLALM) form a helical; Signal-anchor for type II membrane protein membrane-spanning segment. Residues 48–250 (PQEQGGQVAD…KTFFGAVMVG (203 aa)) lie on the Extracellular side of the membrane. The 163-residue stretch at 87-249 (PAAHLIGIAK…GKTFFGAVMV (163 aa)) folds into the THD domain. Asn228 carries N-linked (GlcNAc...) asparagine glycosylation.

Belongs to the tumor necrosis factor family. Heterotrimer of either two LTB and one LTA subunits or (less prevalent) two LTA and one LTB subunits.

It localises to the membrane. Cytokine that binds to LTBR/TNFRSF3. May play a specific role in immune response regulation. Provides the membrane anchor for the attachment of the heterotrimeric complex to the cell surface. The protein is Lymphotoxin-beta (LTB) of Notamacropus eugenii (Tammar wallaby).